A 107-amino-acid chain; its full sequence is Cytochrome c2 (107 aa).

A Pyrrolidone carboxylic acid modification is found at Q1. The heme c site is built by C13, C16, H17, and M79.

Belongs to the cytochrome c family. In terms of processing, binds 1 heme c group covalently per subunit.

It is found in the periplasm. Cytochrome c2 is found mainly in purple, non-sulfur, photosynthetic bacteria where it functions as the electron donor to the oxidized bacteriochlorophyll in the photophosphorylation pathway. However, it may also have a role in the respiratory chain and is found in some non-photosynthetic bacteria. The sequence is that of Cytochrome c2 from Rhodoplanes tepidamans (Rhodoplanes cryptolactis).